We begin with the raw amino-acid sequence, 70 residues long: Translation initiation factor IF-1 (70 aa).

The region spanning 1–70 is the S1-like domain; that stretch reads MKETNLSIKG…LTKGRIIYRH (70 aa).

It belongs to the IF-1 family. As to quaternary structure, component of the 30S ribosomal translation pre-initiation complex which assembles on the 30S ribosome in the order IF-2 and IF-3, IF-1 and N-formylmethionyl-tRNA(fMet); mRNA recruitment can occur at any time during PIC assembly.

It localises to the cytoplasm. Functionally, one of the essential components for the initiation of protein synthesis. Stabilizes the binding of IF-2 and IF-3 on the 30S subunit to which N-formylmethionyl-tRNA(fMet) subsequently binds. Helps modulate mRNA selection, yielding the 30S pre-initiation complex (PIC). Upon addition of the 50S ribosomal subunit IF-1, IF-2 and IF-3 are released leaving the mature 70S translation initiation complex. The polypeptide is Translation initiation factor IF-1 (Mycoplasmoides gallisepticum (strain R(low / passage 15 / clone 2)) (Mycoplasma gallisepticum)).